We begin with the raw amino-acid sequence, 837 residues long: Semaphorin-4B (837 aa).

The N-terminal stretch at 1-43 is a signal peptide; that stretch reads MLRTAMGLRSWLAAPWGALPPRPPLLLLLLLLLLLQPPPPTWA. At 44–717 the chain is on the extracellular side; it reads LSPRISLPLG…WGADRSYWKE (674 aa). The Sema domain occupies 47–523; sequence RISLPLGSEE…SHSGVVQVPM (477 aa). N-linked (GlcNAc...) asparagine glycans are attached at residues asparagine 69 and asparagine 96. 2 disulfide bridges follow: cysteine 120–cysteine 131 and cysteine 149–cysteine 158. The N-linked (GlcNAc...) asparagine glycan is linked to asparagine 165. Cystine bridges form between cysteine 286–cysteine 399 and cysteine 310–cysteine 359. Asparagine 410 and asparagine 525 each carry an N-linked (GlcNAc...) asparagine glycan. Positions 525–579 constitute a PSI domain; it reads NCSLYRSCGDCLLARDPYCAWSGSSCKHVSLYQPQLATRPWIQDIEGASAKDLCS. 2 disulfides stabilise this stretch: cysteine 526–cysteine 543 and cysteine 611–cysteine 656. Residues 604–663 form the Ig-like C2-type domain; sequence NTVNTLACPLLSNLATRLWLRNGAPVNASASCHVLPTGDLLLVGTQQLGEFQCWSLEEGF. Asparagine 630 carries an N-linked (GlcNAc...) asparagine glycan. The chain crosses the membrane as a helical span at residues 718–738; sequence FLVMCTLFVLAVLLPVLFLLY. At 739 to 837 the chain is on the cytoplasmic side; that stretch reads RHRNSMKVFL…LGSEIRDSVV (99 aa). The disordered stretch occupies residues 767–805; it reads PETRPLNGLGPPSTPLDHRGYQSLSDSPPGSRVFTESEK. A phosphoserine mark is found at serine 793, serine 818, and serine 830.

This sequence belongs to the semaphorin family.

It localises to the membrane. In terms of biological role, inhibits axonal extension by providing local signals to specify territories inaccessible for growing axons. This chain is Semaphorin-4B, found in Homo sapiens (Human).